Consider the following 127-residue polypeptide: Chorismate mutase AroH (127 aa).

A Chorismate mutase aroH-type domain is found at 3–121 (IRGIRGATTV…VVVLRPDLSL (119 aa)). Prephenate is bound by residues R7, 74–78 (TCMQE), R90, and Y108.

Homotrimer.

It is found in the cytoplasm. It carries out the reaction chorismate = prephenate. Its pathway is metabolic intermediate biosynthesis; prephenate biosynthesis; prephenate from chorismate: step 1/1. Functionally, catalyzes the Claisen rearrangement of chorismate to prephenate. Probably involved in the aromatic amino acid biosynthesis. The chain is Chorismate mutase AroH from Bacillus subtilis (strain 168).